A 72-amino-acid chain; its full sequence is Translation initiation factor IF-1 (72 aa).

One can recognise an S1-like domain in the interval Ala2–Arg72.

It belongs to the IF-1 family. In terms of assembly, component of the 30S ribosomal translation pre-initiation complex which assembles on the 30S ribosome in the order IF-2 and IF-3, IF-1 and N-formylmethionyl-tRNA(fMet); mRNA recruitment can occur at any time during PIC assembly.

The protein localises to the cytoplasm. In terms of biological role, one of the essential components for the initiation of protein synthesis. Stabilizes the binding of IF-2 and IF-3 on the 30S subunit to which N-formylmethionyl-tRNA(fMet) subsequently binds. Helps modulate mRNA selection, yielding the 30S pre-initiation complex (PIC). Upon addition of the 50S ribosomal subunit IF-1, IF-2 and IF-3 are released leaving the mature 70S translation initiation complex. The sequence is that of Translation initiation factor IF-1 from Haemophilus influenzae (strain ATCC 51907 / DSM 11121 / KW20 / Rd).